A 25-amino-acid polypeptide reads, in one-letter code: M-lycotoxin-Hc1a (25 aa).

A Leucine amide modification is found at Leu-25.

It belongs to the cationic peptide 04 (cupiennin) family. 05 subfamily. As to expression, expressed by the venom gland.

It is found in the secreted. Its subcellular location is the target cell membrane. Functionally, forms pore that permeabilize the cell membrane. Promotes efflux of calcium from synaptosomes, causes hemolysis, and dissipates voltage gradients across muscle membrane. Potently inhibits the growth of bacteria, yeast and Leishmania. Is lethal to lepidopteran larvae. May function both in the prey capture strategy as well as protection from infectious organisms arising from prey ingestion. In Hogna carolinensis (Carolina wolf spider), this protein is M-lycotoxin-Hc1a.